The sequence spans 115 residues: Large ribosomal subunit protein bL20 (115 aa).

This sequence belongs to the bacterial ribosomal protein bL20 family.

Its function is as follows. Binds directly to 23S ribosomal RNA and is necessary for the in vitro assembly process of the 50S ribosomal subunit. It is not involved in the protein synthesizing functions of that subunit. The polypeptide is Large ribosomal subunit protein bL20 (Chlorobium phaeobacteroides (strain DSM 266 / SMG 266 / 2430)).